The primary structure comprises 440 residues: Acetylornithine deacetylase (440 aa).

Position 101 (H101) interacts with Zn(2+). D103 is an active-site residue. Residue D133 coordinates Zn(2+). Catalysis depends on E167, which acts as the Proton acceptor. Zn(2+)-binding residues include E168 and H412.

It belongs to the peptidase M20A family. ArgE subfamily. Homodimer. Zn(2+) serves as cofactor. Co(2+) is required as a cofactor.

It catalyses the reaction N(2)-acetyl-L-ornithine + H2O = L-ornithine + acetate. It participates in amino-acid biosynthesis; L-arginine biosynthesis; L-ornithine from N(2)-acetyl-L-ornithine (linear): step 1/1. The protein is Acetylornithine deacetylase of Arabidopsis thaliana (Mouse-ear cress).